The primary structure comprises 1671 residues: MSSPHIELHSQRTLSPQPSSNNFELTGNKSCALSASLNGSIDDLNNNNNNNNNNNNNNNNNNNNNNNNNNNNNNNNNNNNNNNDGDKNDKKLLIITNAPTPPLTPPQPTKTQQTLLELNQKFQEQQQQQQQQQQLQKQNKQQQSQKQQEEPPSSQQEEPPLSQQQQEQEQEQEQEQEQEEQSKQKIEGKGGGGEEEECEGGGGGEGEGEEQFKEGDEEEHEGIEIDPNLPTTGYTGKRRSSLQINEASPKLIQTPSVDRTLCILDSLPCPIFQIGIIENTENGNITLTGFANERLTTLLSCSSNLLVDSLKSIPSPHYNTVPSLESCNSIPINNLAPGLLPNTDPTKILDPYISLYNKKQLKERYSNNNNNTNTNNNNNNNNNNNNNNNNNNNNNNNDTTTTTTTTTTTTTTTTTTTTTTTTNESDNNNNNNNNNNNNNNNNNNNNNNNEEIKQNTKEGEEILHESTNSTGTGNSISRPNSILQCILDSFHEQKTITEKVLLSNFLIRQQYKSRATIKPFPDGCICIFEYIENINLNYQQPPTSLNDRINSTNKLTNEMELLSLSPDSNHQHVQKLHNHNHNHHNHNHNNTTQRASSTDSPFIHSVSANSLSSMSSNSSVTSACASLSSNSSSNSNNNSNNASSSNCSSNANSNNTNSSSSNCCCCCNNNNNNNTSSTSSTISSASSTKSKSYLHQQHKNSKVYSTLLNSFENLSFLLKSTPIIIWRADHNGEMVFFKKSDEIPIDEKKVVGNNFQDFLQWVPQTYRTNFQEMFQNSLKCGKIFEFLFWFQTPQNYVQLFKIAGYPIFHIDGKDCIASKRYLIGWLGVTYNYLINDGAEISIKGSANLDSMYEKFKIIYEMPNIERTKLTNNGISSGGDITNANNNGGSSESSNKILEKKKHLISEAEKECFLKCKETYNILFKLSLLGVMFSTFKGIILDANDMLLQTIGYTRGDLENGKIDWMLLTPPEHFEISARALQELKAKRWCQPIEKAYIHKSGKRVPVLITSAMIDGSTEQCITFVFDLSRYRQAEMAAIEATRLKTQFITNISHELRTPCHGIVGMSQLLLDSQLTNTQRDNIDSIKRSTDSLISLINDILDFSKLEYGKVTLENESFELLPMIEEVLDSQATAANRKGIDLIFVMGRDYPVPPVIFGDRNSLKKVLLNLVGNAVKFTETGFVLLEISTDYESGDQISLRFTVKDSGIGIPENKIEQIFVPFGQIDGSFSRKYGGSGLGLSFCKELVALMGGYIRVESGDQEGGKGTTFWFAIKVSISSPSYLPNSVPAANQFFYPEYRPSHYNNVIGNGDSPKNVLIIESNQMVIMSIQSILLSMKCECISASKAITALDLLESSKSTENQIDIIVCSDKSTFVQQILDYVTTEKVILYGVDPNSKYNENSKVYSYLVTPITHSKLISSILLSKNLKSKNSFLTTTNNTNNTNNTNNIENKSSIDSPLSITSTSSSIITPILTSNNLDLNNNNNNNNNSILVSNNGGVDGGNNVPSTLTTIQQSQPKKYILVAEDNDINIKVVVRQLEKLGYTAIVGINGLKALEIIGSFPICLILLDCQMPQMDGFTCSTILRQIEPTGQRIPIIAMTANDSKDRCFEVGMDDYLSKPVRVDRLQKTLSDWIKTDENGNPTNSYNFYPLSYSLVYNNFIDTQLKKEKNDD.

Positions 1 to 10 are enriched in basic and acidic residues; it reads MSSPHIELHS. Disordered regions lie at residues 1 to 27, 42 to 89, 126 to 241, 365 to 451, 579 to 603, and 629 to 651; these read MSSP…ELTG, DDLN…DKND, QQQQ…RRSS, YSNN…NNEE, HNHN…SPFI, and SNSS…SSNA. Polar residues predominate over residues 11–27; it reads QRTLSPQPSSNNFELTG. Composition is skewed to low complexity over residues 45 to 83 and 126 to 167; these read NNNN…NNNN and QQQQ…QQQE. A compositionally biased stretch (acidic residues) spans 168 to 179; that stretch reads QEQEQEQEQEQE. Over residues 367–449 the composition is skewed to low complexity; it reads NNNNNTNTNN…NNNNNNNNNN (83 aa). Positions 591–600 are enriched in polar residues; it reads TTQRASSTDS. Residues 1050-1276 form the Histidine kinase domain; that stretch reads NISHELRTPC…TFWFAIKVSI (227 aa). The Response regulatory domain maps to 1519 to 1633; the sequence is YILVAEDNDI…RLQKTLSDWI (115 aa).

Under osmotic stress conditions, this protein undergoes phosphorylation at a serine residue in the kinase core, which is not due to an autophosphorylation of dokA. This is in contrast to the classic two-component paradigm, which predicts only histidine and aspartate phosphorylation.

Its function is as follows. Part of the osmoregulatory pathway which leads to the increase of intracellular cAMP concentration in response to hyperosmotic stress. Thought to negatively regulate the rdeA-regA pathway by acting as a phosphatase towards the HPt protein rdeA. Has probably no histidine kinase activity. The sequence is that of Hybrid signal transduction protein dokA (dokA) from Dictyostelium discoideum (Social amoeba).